The chain runs to 394 residues: Deoxyguanosinetriphosphate triphosphohydrolase-like protein (394 aa).

The segment at 1 to 36 (MSQAPYFVPRAPYAEDPSKSKGRRFKEDESRTRTPF) is disordered. A compositionally biased stretch (basic and acidic residues) spans 25–36 (FKEDESRTRTPF). In terms of domain architecture, HD spans 70 to 210 (RLTHTLEVAQ…AALADDIAYN (141 aa)).

Belongs to the dGTPase family. Type 2 subfamily.

The chain is Deoxyguanosinetriphosphate triphosphohydrolase-like protein from Caulobacter vibrioides (strain ATCC 19089 / CIP 103742 / CB 15) (Caulobacter crescentus).